We begin with the raw amino-acid sequence, 332 residues long: MNKKVLTLSAVMASMLFGAAAHAADTRIGVTIYKYDDNFMSVVRKAIEQDAKAAPDVQLLMNDSQNDQSKQNDQIDVLLAKGVKALAINLVDPAAAGTVIEKARGQNVPVVFFNKEPSRKALDSYDKAYYVGTDSKESGIIQGDLIAKHWAANQGWDLNKDGQIQFVLLKGEPGHPDAEARTTYVIKELNDKGIKTEQLQLDTAMWDTAQAKDKMDAWLSGPNANKIEVVIANNDAMAMGAVEALKAHNKSSIPVFGVDALPEALALVKSGALAGTVLNDANNQAKATFDLAKNLADGKGAADGTNWKIDNKVVRVPYVGVDKDNLAEFSKK.

An N-terminal signal peptide occupies residues 1–23 (MNKKVLTLSAVMASMLFGAAAHA). Aspartate 37 and asparagine 114 together coordinate beta-D-galactose. Beta-D-glucose is bound by residues aspartate 37 and asparagine 114. The Ca(2+) site is built by aspartate 157, asparagine 159, aspartate 161, glutamine 163, and glutamine 165. Beta-D-galactose is bound by residues histidine 175, aspartate 177, and arginine 181. 3 residues coordinate beta-D-glucose: histidine 175, aspartate 177, and arginine 181. Glutamate 228 serves as a coordination point for Ca(2+). Residues asparagine 234, aspartate 259, and asparagine 279 each coordinate beta-D-galactose. Beta-D-glucose-binding residues include asparagine 234, aspartate 259, and asparagine 279.

The protein belongs to the bacterial solute-binding protein 2 family. As to quaternary structure, the ABC transporter complex is composed of one ATP-binding protein (MglA), two transmembrane proteins (MglC) and a solute-binding protein (MglB).

The protein localises to the periplasm. Part of the ABC transporter complex MglABC involved in galactose/methyl galactoside import. In addition, binds D-galactose and D-glucose and plays a role in the chemotaxis towards these two sugars by interacting with the Trg chemoreceptor. This chain is D-galactose/methyl-galactoside binding periplasmic protein MglB (mglB), found in Escherichia coli O6:H1 (strain CFT073 / ATCC 700928 / UPEC).